A 133-amino-acid chain; its full sequence is MGKNDKKGADKGGKAKGGDKGKDAKDTKDSGSGGKAKGAQSINVRHILCEKHAKKEEALAKLNDGVKFDEVAREYSEDKARQGGSLGWKTKGSLDPKFEEVAFALETSTTNSPKFVEVKTGFGYHIIMVEGRK.

The span at 1 to 29 (MGKNDKKGADKGGKAKGGDKGKDAKDTKD) shows a compositional bias: basic and acidic residues. The tract at residues 1–42 (MGKNDKKGADKGGKAKGGDKGKDAKDTKDSGSGGKAKGAQSI) is disordered. Positions 39–131 (AQSINVRHIL…FGYHIIMVEG (93 aa)) constitute a PpiC domain.

The protein belongs to the PpiC/parvulin rotamase family. PIN4 subfamily.

The enzyme catalyses [protein]-peptidylproline (omega=180) = [protein]-peptidylproline (omega=0). In terms of biological role, PPIases accelerate the folding of proteins. It catalyzes the cis-trans isomerization of proline imidic peptide bonds in oligopeptides. The chain is Peptidyl-prolyl cis-trans isomerase PIN4 (PIN4) from Gibberella zeae (strain ATCC MYA-4620 / CBS 123657 / FGSC 9075 / NRRL 31084 / PH-1) (Wheat head blight fungus).